The sequence spans 132 residues: Protein KRTCAP2 homolog (132 aa).

A run of 4 helical transmembrane segments spans residues 1–21 (MAVP…LIFS), 35–55 (MATV…LTAV), 69–89 (AKLF…CGMV), and 92–109 (VCAT…YYIN).

This sequence belongs to the KRTCAP2 family. In terms of assembly, component of the oligosaccharyltransferase (OST) complex.

Its subcellular location is the membrane. In terms of biological role, subunit of the oligosaccharyl transferase (OST) complex that catalyzes the initial transfer of a defined glycan (Glc(3)Man(9)GlcNAc(2) in eukaryotes) from the lipid carrier dolichol-pyrophosphate to an asparagine residue within an Asn-X-Ser/Thr consensus motif in nascent polypeptide chains, the first step in protein N-glycosylation. N-glycosylation occurs cotranslationally and the complex associates with the Sec61 complex at the channel-forming translocon complex that mediates protein translocation across the endoplasmic reticulum (ER). All subunits are required for a maximal enzyme activity. In Aedes aegypti (Yellowfever mosquito), this protein is Protein KRTCAP2 homolog.